The chain runs to 69 residues: Large ribosomal subunit protein bL31 (69 aa).

Positions 17, 19, 37, and 40 each coordinate Zn(2+).

Belongs to the bacterial ribosomal protein bL31 family. Type A subfamily. In terms of assembly, part of the 50S ribosomal subunit. It depends on Zn(2+) as a cofactor.

Binds the 23S rRNA. This is Large ribosomal subunit protein bL31 from Caldicellulosiruptor saccharolyticus (strain ATCC 43494 / DSM 8903 / Tp8T 6331).